The chain runs to 723 residues: Transmembrane channel-like protein 7 (723 aa).

The disordered stretch occupies residues 1 to 21 (MSESSASALQLGRPSRQPAVH). At 1–168 (MSESSASALQ…GIQSYFSFLR (168 aa)) the chain is on the extracellular side. The N-linked (GlcNAc...) asparagine glycan is linked to asparagine 24. The interval 51-70 (RRRTTVHSRDKQSGTLLKST) is disordered. N-linked (GlcNAc...) asparagine glycosylation occurs at asparagine 84. The residue at position 89 (serine 89) is a Phosphoserine. Asparagine 96 carries an N-linked (GlcNAc...) asparagine glycan. The helical transmembrane segment at 169–189 (FLVLLNLVIFLIIFMLVLLPI) threads the bilayer. Residues 190-219 (LLTKYKITNSSFVLIPFKDTDIQCTVYPVS) are Cytoplasmic-facing. A helical transmembrane segment spans residues 220-240 (SSGLIYFYSYIIDLLSGTGFL). Topologically, residues 241–263 (EETSLFYGHYTIDGVKFQNFTYD) are extracellular. The N-linked (GlcNAc...) asparagine glycan is linked to asparagine 259. A helical transmembrane segment spans residues 264-284 (LPLAYLISTIAYLALSLLWIV). The Cytoplasmic segment spans residues 285–362 (KRSVEGFKIN…EETIRIYSLR (78 aa)). The helical transmembrane segment at 363–383 (LFLNCIVLAVLGACFYAIYVA) threads the bilayer. Residues 384-404 (TVFSQEHMKKEIDKMVFGENL) lie on the Extracellular side of the membrane. The chain crosses the membrane as a helical span at residues 405-425 (LILYLPSIVITLANFITPMIF). Over 426–494 (AKIIRYEDYS…PCWETQVGQE (69 aa)) the chain is Cytoplasmic. Residues 495–515 (MYKLMIFDFIIILAVTLFVDF) traverse the membrane as a helical segment. At 516 to 555 (PRKLLVTYCSSWKLIQCWGQQEFAIPDNVLGIVYGQTICW) the chain is on the extracellular side. The helical transmembrane segment at 556–576 (IGAFFSPLLPAIATLKFIIIF) threads the bilayer. Residues 577–601 (YVKEWSLLYTCRPSPRPFRASNSNF) are Cytoplasmic-facing. A helical transmembrane segment spans residues 602–622 (FFLLVLLIGLCLAIIPLTISI). Residues 623–665 (SRIPSSKACGPFTNFNTTWEVIPKTVSTFPSSLQSFIHGVTSE) lie on the Extracellular side of the membrane. Residue asparagine 638 is glycosylated (N-linked (GlcNAc...) asparagine). Residues 666 to 686 (AFAVPFFMIICLIMFYFIALA) form a helical membrane-spanning segment. At 687 to 723 (GAHKRVVIQLREQLSLESRDKRYLIQKLTEAQRDTRN) the chain is on the cytoplasmic side.

This sequence belongs to the TMC family. In terms of assembly, interacts with PIEZO2; the interaction inhibits PIEZO2-conducted mechanically activated currents.

The protein localises to the membrane. Acts as an inhibitory modulator of PIEZO2 mechanosensitive channel in dorsal root ganglion (DRG) neurons through physical interactions or interference with the interaction between Piezo2 and the cytoskeleton. The chain is Transmembrane channel-like protein 7 (TMC7) from Macaca fascicularis (Crab-eating macaque).